A 2179-amino-acid polypeptide reads, in one-letter code: Probable inactive serine/threonine-protein kinase lvsG (2179 aa).

The disordered stretch occupies residues 100–167 (DHDLNKNKNN…TSISLNDLNS (68 aa)). Low complexity-rich tracts occupy residues 106–121 (NKNN…NNSG) and 141–159 (LSPS…LSTS). A WD 1 repeat occupies 216–256 (LYERSLKTSQQQQQQQQQQFKFQPNETLSLWEYFDEINSPP). Disordered regions lie at residues 281-300 (LDNK…NSQS), 523-556 (DNDN…TVGW), 589-621 (DSMG…NSGK), 778-801 (KSLK…QPQF), 844-959 (NNHH…NKPS), 1033-1055 (AQQQ…SKQL), 1079-1153 (GISK…STTD), 1339-1362 (NHSN…KNGS), and 1785-1807 (TTTT…PNSL). In terms of domain architecture, BEACH spans 463–801 (YHQPLENQFE…QQQTQQQPQF (339 aa)). Over residues 534–548 (NSSSSNNNNNNNNED) the composition is skewed to low complexity. Positions 590–602 (SMGGGIGSIGSTG) are enriched in gly residues. Low complexity-rich tracts occupy residues 783 to 800 (QRQQ…QQPQ), 853 to 943 (NSNI…GVNN), 1033 to 1047 (AQQQ…QQQA), and 1084 to 1098 (TTNA…TNSN). Positions 1021–1049 (LQQQLQQQQQQQAQQQQSQQQSQQQQANS) form a coiled coil. In terms of domain architecture, Protein kinase spans 1064 to 1400 (ESMIKKYSNG…VNELLSSSLF (337 aa)). Positions 1099–1122 (MGDSIGNNITSPPSPTSLKDSSSI) are enriched in polar residues. The segment covering 1123–1134 (QQQQQQQQQQQQ) has biased composition (low complexity). Over residues 1135 to 1153 (NSESTRPITPPNVSNSTTD) the composition is skewed to polar residues. Low complexity-rich tracts occupy residues 1339–1360 (NHSN…NNKN) and 1785–1801 (TTTT…NNNN). 6 WD repeats span residues 1864–1903 (EHNA…SLTT), 1906–1942 (QHMH…KVNV), 1945–1983 (EPTG…LTHE), 2007–2048 (SNSN…ILEQ), 2052–2089 (HHDS…PIIS), and 2149–2179 (PKQS…KICQ).

It belongs to the protein kinase superfamily. Ser/Thr protein kinase family.

This Dictyostelium discoideum (Social amoeba) protein is Probable inactive serine/threonine-protein kinase lvsG (lvsG).